We begin with the raw amino-acid sequence, 994 residues long: Chloride channel protein 1 (994 aa).

Residues 1 to 118 (MERSQSQQHG…VLRRKLGEDW (118 aa)) lie on the Cytoplasmic side of the membrane. Positions 37 to 61 (SENGGLQHRPRKDLGPRHNAHPTQI) are disordered. A helical transmembrane segment spans residues 119–150 (IFLVLLGLLMALVSWCMDYVSAKSLQAYKWTY). Over 151–158 (AQMQPSLP) the chain is Extracellular. A helical membrane pass occupies residues 159–179 (LQYLAWVTFPLILILFSALFC). The Cytoplasmic segment spans residues 180–183 (QLIS). An intramembrane region (note=Loop between two helices) is located at residues 184–189 (PQAVGS). A Selectivity filter part_1 motif is present at residues 188-192 (GSGIP). S189 is a chloride binding site. Positions 190–195 (GIPEMK) form an intramembrane region, helical. The Cytoplasmic portion of the chain corresponds to 196–208 (TILRGVVLKEYLT). Positions 209 to 224 (LKAFVAKVVALTAGLG) form an intramembrane region, helical. Residues 225–230 (SGIPVG) constitute an intramembrane region (note=Loop between two helices). Residues 230–234 (GKEGP) carry the Selectivity filter part_2 motif. An intramembrane region (helical) is located at residues 231–246 (KEGPFVHIASICAAVL). At 247 to 268 (SKFMSMFSGVYEQPYYYTDILT) the chain is on the cytoplasmic side. Intramembrane regions (helical) lie at residues 269–280 (VGCAVGVGCCFG) and 281–290 (TPLGGVLFSI). At 291–301 (EVTSTYFAVRN) the chain is on the cytoplasmic side. A helical transmembrane segment spans residues 302 to 321 (YWRGFFAATFSAFVFRVLAV). Residues 322 to 347 (WNKDAVTITALFRTNFRMDFPFDLKE) lie on the Extracellular side of the membrane. The helical transmembrane segment at 348-376 (LPAFAVIGICCGFLGAVFVYLHRQVMLGV) threads the bilayer. Over 377–390 (RKHKALSQFLAKHR) the chain is Cytoplasmic. Residues 391–408 (LLYPGIVTFVIASLTFPP) traverse the membrane as a helical segment. Residues 409–414 (GMGQFM) lie on the Extracellular side of the membrane. Residues 415 to 418 (AGEL) constitute an intramembrane region (note=Loop between two helices). Residues 419-426 (MPREAIST) constitute an intramembrane region (helical). Residues 427 to 457 (LFDNNTWVKHIGDPKSLGQSAVWIHPQVNVV) lie on the Extracellular side of the membrane. Residues 458–475 (IIILLFFVMKFWMSIVAT) constitute an intramembrane region (helical). An intramembrane region (note=Loop between two helices) is located at residues 476–482 (TMPIPCG). The Selectivity filter part_3 signature appears at 482–486 (GGFMP). An intramembrane region (helical) is located at residues 483–498 (GFMPVFVLGAAFGRLV). Position 484 (F484) interacts with chloride. Topologically, residues 499 to 521 (GEIMAMLFPEGILFDDIIYKILP) are extracellular. The helical intramembrane region spans 522–538 (GGYAVIGAAALTGAVSH). The note=Loop between two helices intramembrane region spans 539–540 (TV). The segment at residues 541–554 (STAVICFELTGQIA) is an intramembrane region (helical). Topologically, residues 555–557 (HIL) are extracellular. Positions 558–571 (PMMVAVILANMVAQ) form an intramembrane region, helical. Residues 572 to 575 (SLQP) constitute an intramembrane region (note=Loop between two helices). The helical intramembrane region spans 576-578 (SLY). A chloride-binding site is contributed by Y578. Residues 579 to 994 (DSIIQVKKLP…DEEDEDELIL (416 aa)) lie on the Cytoplasmic side of the membrane. The region spanning 609-668 (MVRDVKFVSASCTYGELRNLLQTTTVKTLPLVDSKDSMILLGSVERSELQSLLQRHLCAE) is the CBS 1 domain. Disordered regions lie at residues 710 to 769 (EDED…SADQ), 880 to 923 (TKSG…DGAP), and 965 to 994 (NLGPEEDLADILHGPSLRSTDEEDEDELIL). Residues 725 to 741 (TPTPPPPPPPPLPPQFP) show a composition bias toward pro residues. Positions 827-882 (IDQSPFQLVEQTTLHKTHTLFSLLGLHLAYVTSMGKLRGVLALEELQKAIKGHTKS) constitute a CBS 2 domain. Residue S892 is modified to Phosphoserine. Acidic residues predominate over residues 985 to 994 (DEEDEDELIL).

Belongs to the chloride channel (TC 2.A.49) family. ClC-1/CLCN1 subfamily. In terms of assembly, homodimer. Predominantly expressed in skeletal muscles.

It is found in the cell membrane. It localises to the sarcolemma. The protein resides in the T-tubule. The enzyme catalyses chloride(in) = chloride(out). The catalysed reaction is bromide(in) = bromide(out). It catalyses the reaction iodide(out) = iodide(in). It carries out the reaction thiocyanate(in) = thiocyanate(out). The enzyme catalyses nitrate(in) = nitrate(out). Modulated by membrane voltage with depolarization favouring channel opening and hyperpolarization favouring channel closure. Inhibited by acidic pH and ATP binding due to a shift of voltage dependence of common gating to more positive voltages. Inhibited by 9-anthracene-carboxylic acid. Voltage-gated chloride channel involved in skeletal muscle excitability. Generates most of the plasma membrane chloride conductance in skeletal muscle fibers, stabilizes the resting membrane potential and contributes to the repolarization phase during action potential firing. Forms a homodimeric channel where each subunit has its own ion conduction pathway. Conducts double-barreled currents controlled by two types of gates, two fast glutamate gates that control each subunit independently and a slow common gate that opens and shuts off both subunits simultaneously. Has a significant open probability at muscle resting potential and is further activated upon membrane depolarization. Permeable to small monovalent anions with ion selectivity for chloride &gt; thiocyanate &gt; bromide &gt; nitrate &gt; iodide. The polypeptide is Chloride channel protein 1 (Clcn1) (Rattus norvegicus (Rat)).